The primary structure comprises 354 residues: Thymidylate synthase (354 aa).

Residues 1 to 32 (MPAAGSEPSRPPSPPGVQEQSAEPRPPPPPHG) are disordered. Residue Arg53 coordinates dUMP. The residue at position 117 (Ser117) is a Phosphoserine. A dUMP-binding site is contributed by 178-179 (RR). Cys198 functions as the Nucleophile in the catalytic mechanism. DUMP contacts are provided by residues 218–221 (RSGD), Asn229, and 259–261 (HIY). Position 221 (Asp221) interacts with (6R)-5,10-methylene-5,6,7,8-tetrahydrofolate. Lys349 participates in a covalent cross-link: Glycyl lysine isopeptide (Lys-Gly) (interchain with G-Cter in SUMO2). Ala353 contacts (6R)-5,10-methylene-5,6,7,8-tetrahydrofolate.

It belongs to the thymidylate synthase family. Homodimer.

It is found in the nucleus. The protein resides in the cytoplasm. It localises to the mitochondrion. The protein localises to the mitochondrion matrix. Its subcellular location is the mitochondrion inner membrane. It carries out the reaction dUMP + (6R)-5,10-methylene-5,6,7,8-tetrahydrofolate = 7,8-dihydrofolate + dTMP. The protein operates within pyrimidine metabolism; dTTP biosynthesis. In terms of biological role, catalyzes the reductive methylation of 2'-deoxyuridine 5'-monophosphate (dUMP) to thymidine 5'-monophosphate (dTMP), using the cosubstrate, 5,10- methylenetetrahydrofolate (CH2H4folate) as a 1-carbon donor and reductant and contributes to the de novo mitochondrial thymidylate biosynthesis pathway. This is Thymidylate synthase (TYMS) from Bos taurus (Bovine).